Here is a 156-residue protein sequence, read N- to C-terminus: ATP synthase subunit b (156 aa).

A helical membrane pass occupies residues 7–29 (LFAQMVVFLVLAWFTMKFVWPPL).

The protein belongs to the ATPase B chain family. F-type ATPases have 2 components, F(1) - the catalytic core - and F(0) - the membrane proton channel. F(1) has five subunits: alpha(3), beta(3), gamma(1), delta(1), epsilon(1). F(0) has three main subunits: a(1), b(2) and c(10-14). The alpha and beta chains form an alternating ring which encloses part of the gamma chain. F(1) is attached to F(0) by a central stalk formed by the gamma and epsilon chains, while a peripheral stalk is formed by the delta and b chains.

It is found in the cell inner membrane. In terms of biological role, f(1)F(0) ATP synthase produces ATP from ADP in the presence of a proton or sodium gradient. F-type ATPases consist of two structural domains, F(1) containing the extramembraneous catalytic core and F(0) containing the membrane proton channel, linked together by a central stalk and a peripheral stalk. During catalysis, ATP synthesis in the catalytic domain of F(1) is coupled via a rotary mechanism of the central stalk subunits to proton translocation. Component of the F(0) channel, it forms part of the peripheral stalk, linking F(1) to F(0). The protein is ATP synthase subunit b of Burkholderia ambifaria (strain MC40-6).